Consider the following 687-residue polypeptide: Probable WRKY transcription factor 2 (687 aa).

The tract at residues 197–276 is disordered; that stretch reads YGNYNNRSSS…AGGAPAEDGY (80 aa). 2 stretches are compositionally biased toward polar residues: residues 199–208 and 219–249; these read NYNNRSSSHQ and NIES…TSLE. Residues 267 to 331 constitute a DNA-binding region (WRKY 1); that stretch reads AGGAPAEDGY…YKGAHNHLKP (65 aa). The Zn(2+) site is built by cysteine 298, cysteine 303, histidine 326, and histidine 328. Disordered regions lie at residues 324–384 and 416–453; these read GAHN…STRF and FSND…ESKR. Positions 354-379 are enriched in polar residues; sequence RDSAATWVSCNNTQQQGGSNENNVEE. The span at 435–444 shows a compositional bias: gly residues; sequence YDGGGGGGGG. Residues 481–546 constitute a DNA-binding region (WRKY 2); it reads SDVDILDDGY…YEGKHNHDVP (66 aa). Zn(2+)-binding residues include cysteine 512, cysteine 517, histidine 541, and histidine 543. The segment at 537–599 is disordered; the sequence is YEGKHNHDVP…QVTTNNQSPF (63 aa). Residues 553 to 565 show a composition bias toward gly residues; sequence HGGGGDSGNGNSG. The span at 578-589 shows a compositional bias: basic and acidic residues; that stretch reads HHSEPPRGRFDR. Residues 590 to 599 show a composition bias toward polar residues; sequence QVTTNNQSPF.

Belongs to the WRKY group I family. Low expression in senescent leaves. Expressed in both the unfertilized egg cell and the pollen tube.

Its subcellular location is the nucleus. Functionally, transcription factor. Regulates WOX8 and WOX9 expression and basal cell division patterns during early embryogenesis. Interacts specifically with the W box (5'-(T)TGAC[CT]-3'), a frequently occurring elicitor-responsive cis-acting element. Required to repolarize the zygote from a transient symmetric state. This Arabidopsis thaliana (Mouse-ear cress) protein is Probable WRKY transcription factor 2.